The following is a 273-amino-acid chain: Large ribosomal subunit protein uL2cz/uL2cy (273 aa).

Disordered regions lie at residues 1-20 (MAIH…AVDS) and 224-254 (NPVD…PALG).

The protein belongs to the universal ribosomal protein uL2 family. Part of the 50S ribosomal subunit.

It is found in the plastid. The protein localises to the chloroplast. In Nuphar advena (Common spatterdock), this protein is Large ribosomal subunit protein uL2cz/uL2cy (rpl2-A).